We begin with the raw amino-acid sequence, 513 residues long: ATP synthase subunit alpha (513 aa).

ATP is bound at residue 169-176 (GDRQCGKT).

Belongs to the ATPase alpha/beta chains family. As to quaternary structure, F-type ATPases have 2 components, CF(1) - the catalytic core - and CF(0) - the membrane proton channel. CF(1) has five subunits: alpha(3), beta(3), gamma(1), delta(1), epsilon(1). CF(0) has three main subunits: a(1), b(2) and c(9-12). The alpha and beta chains form an alternating ring which encloses part of the gamma chain. CF(1) is attached to CF(0) by a central stalk formed by the gamma and epsilon chains, while a peripheral stalk is formed by the delta and b chains.

It is found in the cell inner membrane. It catalyses the reaction ATP + H2O + 4 H(+)(in) = ADP + phosphate + 5 H(+)(out). Its function is as follows. Produces ATP from ADP in the presence of a proton gradient across the membrane. The alpha chain is a regulatory subunit. The sequence is that of ATP synthase subunit alpha from Burkholderia orbicola (strain AU 1054).